Reading from the N-terminus, the 171-residue chain is UPF0763 protein KHP_0657 (171 aa).

The protein belongs to the UPF0763 family.

The sequence is that of UPF0763 protein KHP_0657 from Helicobacter pylori (strain 51).